The sequence spans 479 residues: Calcium/calmodulin-dependent protein kinase type II delta chain (479 aa).

In terms of domain architecture, Protein kinase spans 14-272; sequence YQLFEELGKG…ASEALKHPWI (259 aa). Residues 20–28 and lysine 43 each bind ATP; that span reads LGKGAFSVV. The active-site Proton acceptor is aspartate 136. A Phosphothreonine modification is found at threonine 287. Phosphoserine is present on residues serine 315 and serine 319. Threonine 337 carries the phosphothreonine modification.

Belongs to the protein kinase superfamily. CAMK Ser/Thr protein kinase family. CaMK subfamily. In terms of assembly, CAMK2 is composed of four different chains: alpha, beta, gamma, and delta. The different isoforms assemble into homo- or heteromultimeric holoenzymes composed of 8 to 12 subunits.

It catalyses the reaction L-seryl-[protein] + ATP = O-phospho-L-seryl-[protein] + ADP + H(+). The catalysed reaction is L-threonyl-[protein] + ATP = O-phospho-L-threonyl-[protein] + ADP + H(+). With respect to regulation, autophosphorylation of CAMK2 plays an important role in the regulation of the kinase activity. Its function is as follows. CaM-kinase II (CAMK2) is a prominent kinase in the central nervous system. This is Calcium/calmodulin-dependent protein kinase type II delta chain (CAMK2D) from Gallus gallus (Chicken).